A 782-amino-acid chain; its full sequence is E3 ubiquitin-protein ligase SopA (782 aa).

A disordered region spans residues 136–171; that stretch reads GVSVSANNRPTVSEGRTPPVSPSLSLQATSSPSSPA. Positions 157-171 are enriched in low complexity; the sequence is PSLSLQATSSPSSPA. The active-site Glycyl thioester intermediate is Cys753.

Belongs to the SopA E3 ligase family. In terms of processing, ubiquitinated in the presence of host E1 ubiquitin-activating enzyme, E2 ubiquitin-conjugating enzyme and ubiquitin.

Its subcellular location is the secreted. It localises to the host cell. It carries out the reaction S-ubiquitinyl-[E2 ubiquitin-conjugating enzyme]-L-cysteine + [acceptor protein]-L-lysine = [E2 ubiquitin-conjugating enzyme]-L-cysteine + N(6)-ubiquitinyl-[acceptor protein]-L-lysine.. Its function is as follows. Effector proteins function to alter host cell physiology and promote bacterial survival in host tissues. This protein is an E3 ubiquitin ligase that interferes with host's ubiquitination pathway. For instance, prevents host innate immune response by ubiquitinating and thus sending to degradation host E3 ubiquitin ligases TRIM56 and TRIM65. The protein is E3 ubiquitin-protein ligase SopA (sopA) of Salmonella typhimurium (strain D23580).